We begin with the raw amino-acid sequence, 539 residues long: uncharacterized protein (539 aa).

Ser216 acts as the Acyl-ester intermediate in catalysis.

This sequence belongs to the type-B carboxylesterase/lipase family.

It is found in the cytoplasm. It localises to the nucleus. This is an uncharacterized protein from Schizosaccharomyces pombe (strain 972 / ATCC 24843) (Fission yeast).